The primary structure comprises 143 residues: Transcriptional regulator MraZ (143 aa).

SpoVT-AbrB domains follow at residues 5-47 (TYTP…PKEE) and 76-119 (TDEQ…DKQA).

It belongs to the MraZ family. As to quaternary structure, forms oligomers.

Its subcellular location is the cytoplasm. The protein resides in the nucleoid. This chain is Transcriptional regulator MraZ, found in Nocardia farcinica (strain IFM 10152).